A 373-amino-acid polypeptide reads, in one-letter code: Zinc finger CCCH domain-containing protein 15 homolog (373 aa).

Residues 1–27 (MPPKQAQSKKTVEKEKKKKVEDKTFGL) are disordered. Over residues 10–25 (KTVEKEKKKKVEDKTF) the composition is skewed to basic and acidic residues. 2 consecutive C3H1-type zinc fingers follow at residues 95–123 (DPKSIVCEYFKQGVTCPKGNRCKFAHDLA) and 167–205 (KPTAIICKFFLDAIESKKYGWFWECPNGGEKCAYQHCLP). A coiled-coil region spans residues 252–326 (KEEKRLQKEK…ALANQINTSL (75 aa)). Residues 325 to 373 (SLFTDGGVLPSDDDDDDDDDDDDDEDGDDEEEDDDEEEGEYEEEEASDE) are disordered. Over residues 335–373 (SDDDDDDDDDDDDDEDGDDEEEDDDEEEGEYEEEEASDE) the composition is skewed to acidic residues.

The protein belongs to the ZC3H15/TMA46 family.

This is Zinc finger CCCH domain-containing protein 15 homolog from Dictyostelium discoideum (Social amoeba).